The primary structure comprises 149 residues: Endoribonuclease YbeY (149 aa).

Zn(2+) is bound by residues histidine 115, histidine 119, and histidine 125.

This sequence belongs to the endoribonuclease YbeY family. Requires Zn(2+) as cofactor.

It localises to the cytoplasm. Its function is as follows. Single strand-specific metallo-endoribonuclease involved in late-stage 70S ribosome quality control and in maturation of the 3' terminus of the 16S rRNA. This Mycoplasmopsis pulmonis (strain UAB CTIP) (Mycoplasma pulmonis) protein is Endoribonuclease YbeY.